A 589-amino-acid polypeptide reads, in one-letter code: MLALDETEINDGAKRWIVSIAKHLNPSSIYVCDGTKEEFDDLASAMVKDGEMIKLNEKNFKNSYLYRSNATDVARTEERTFISARDKSFVGPLNNFLPLDRVKQVWNQFFKGAYTGKTMFVIPYALSSPESKFADFGIEVTDSKYVVLNLHYITRMGKGVIEKIGDRFIKGVHATGNLDPGNKFIIHMPWEKPEGVDADILSVNTNYGGNALLSKKCHALRIASVRAREEGWLAEHMLLLEVKDPQGKSHFITGAFPSASGKTNLAMISPPKDYRDAGWSTRLISDDISWIKIVDGKFMATNPENGFFAVVPGTNYNTNKNAMATLSKNTIFTNVGLTMSGDPWWEGLDPVYDELYDWKGNKRKIGGEPIAHPNSRYTSPLTNYPYLSDLYEDPEGVPVSAILFGGRRATLIPLVFEAFNWNHGVFLGATMGVERTAASEGKVGDLRRDPMAMRPFCGYNINEYFRHWIEIGERSKNKPKIFYVNWFRRRADGTFIWPGFAENFRVLEWIIYRTSHNDNAVETPIGYIPESLNLAGLNISEEDVKELFRIDKEGWKEEMNEIQKYFSELGNVPEEILKEFELEKKRLGY.

Substrate-binding positions include Arg-75 and 207–209 (YGG). Lys-216 and His-236 together coordinate Mn(2+). Ser-258 serves as a coordination point for substrate. GTP is bound at residue 259 to 264 (ASGKTN). Residue Ser-260 is part of the active site. Asp-287 is a Mn(2+) binding site. 374-376 (NSR) contacts substrate. GTP contacts are provided by residues Arg-376, Arg-407, and 500-503 (FAEN).

This sequence belongs to the phosphoenolpyruvate carboxykinase [GTP] family. Mn(2+) serves as cofactor.

Its subcellular location is the cytoplasm. It carries out the reaction oxaloacetate + GTP = phosphoenolpyruvate + GDP + CO2. The protein operates within carbohydrate biosynthesis; gluconeogenesis. Catalyzes the conversion of oxaloacetate (OAA) to phosphoenolpyruvate (PEP), the rate-limiting step in the metabolic pathway that produces glucose from lactate and other precursors derived from the citric acid cycle. The chain is Phosphoenolpyruvate carboxykinase [GTP] from Thermoplasma volcanium (strain ATCC 51530 / DSM 4299 / JCM 9571 / NBRC 15438 / GSS1).